We begin with the raw amino-acid sequence, 647 residues long: DNA mismatch repair protein MutL (647 aa).

It belongs to the DNA mismatch repair MutL/HexB family.

Its function is as follows. This protein is involved in the repair of mismatches in DNA. It is required for dam-dependent methyl-directed DNA mismatch repair. May act as a 'molecular matchmaker', a protein that promotes the formation of a stable complex between two or more DNA-binding proteins in an ATP-dependent manner without itself being part of a final effector complex. This is DNA mismatch repair protein MutL from Bacillus thuringiensis subsp. konkukian (strain 97-27).